Reading from the N-terminus, the 137-residue chain is 15.7 kDa heat shock protein, peroxisomal (137 aa).

One can recognise a sHSP domain in the interval 15 to 134 (QEWSRSTALI…SSKVRNVNIT (120 aa)). The short motif at 135–137 (SKL) is the Microbody targeting signal element.

This sequence belongs to the small heat shock protein (HSP20) family. May form oligomeric structures.

Its subcellular location is the peroxisome. Its function is as follows. Possesses chaperone activity. This Arabidopsis thaliana (Mouse-ear cress) protein is 15.7 kDa heat shock protein, peroxisomal (HSP15.7).